Reading from the N-terminus, the 625-residue chain is Endoglucanase D (625 aa).

Positions 1–17 (SLTGVFPSGLIETKVSA) are cleaved as a signal peptide. Residue Asp177 is the Nucleophile of the active site. Active-site residues include His492 and Asp522. The active-site Proton donor is the Glu531. The 71-residue stretch at 555–625 (NEVLYGDVND…LIRVIEKLPI (71 aa)) folds into the Dockerin domain.

The protein belongs to the glycosyl hydrolase 9 (cellulase E) family. The cofactor is Ca(2+).

It catalyses the reaction Endohydrolysis of (1-&gt;4)-beta-D-glucosidic linkages in cellulose, lichenin and cereal beta-D-glucans.. In terms of biological role, this enzyme catalyzes the endohydrolysis of 1,4-beta-glucosidic linkages in cellulose, lichenin and cereal beta-D-glucans. The protein is Endoglucanase D (celD) of Acetivibrio thermocellus (Hungateiclostridium thermocellum).